The following is a 366-amino-acid chain: Aminomethyltransferase (366 aa).

Belongs to the GcvT family. As to quaternary structure, the glycine cleavage system is composed of four proteins: P, T, L and H.

It catalyses the reaction N(6)-[(R)-S(8)-aminomethyldihydrolipoyl]-L-lysyl-[protein] + (6S)-5,6,7,8-tetrahydrofolate = N(6)-[(R)-dihydrolipoyl]-L-lysyl-[protein] + (6R)-5,10-methylene-5,6,7,8-tetrahydrofolate + NH4(+). The glycine cleavage system catalyzes the degradation of glycine. The chain is Aminomethyltransferase from Chlorobium chlorochromatii (strain CaD3).